A 612-amino-acid chain; its full sequence is MHASSPSVRPIQALSDQLISQIAAGEVVERPSAVVKELLENALDAGATHISVRLEQGGVKRIAITDNGRGIAPEQLPLALARHATSKINSLTELENVATLGFRGEALASIASVSQLTLTSRTADAAHAWEISGVQSIDQKSTVAPSSGTAGTTVDVLDLYFNTPARRKFLKTEQTEFGHCAEVVRRIALSRPDVAFSLTHNGKTIDHWAVNDIARRSAHILGNEFSAARLPLKETAGPLRLHGFIGLPTASKARGDAQYFYVNGRFVRDKLLMHAVRSAYQDVLHGDRYPSYVISLELDPALVDVNVHPSKIEVRFRDSRAVHQFVFHAVTRALAQTSATAFGAAPSPTPAPSSALPWLREQQQSTFAPQFNSPYGVAQSAANYGALFANGPASNDSNSAAPSLHTAGSHGATTLPDDEFPLGFALAQLHGIFILAQNTKGLVLVDMHAAHERILYEQLKHALDDNELQVQPLLIPITFYADGMEVGTTEDNQDILHALGFDIAALSPTTLAVRAVPALLKNADAQTLARDVLRDVREFGGSRVLLERRNELLGTLACHTAVRANRTLTVPEMNALLRQMEATERADQCNHGRPTWVQLGLSDLDKLFERGR.

It belongs to the DNA mismatch repair MutL/HexB family.

In terms of biological role, this protein is involved in the repair of mismatches in DNA. It is required for dam-dependent methyl-directed DNA mismatch repair. May act as a 'molecular matchmaker', a protein that promotes the formation of a stable complex between two or more DNA-binding proteins in an ATP-dependent manner without itself being part of a final effector complex. The sequence is that of DNA mismatch repair protein MutL from Herminiimonas arsenicoxydans.